The chain runs to 386 residues: Succinate--CoA ligase [ADP-forming] subunit beta (386 aa).

The region spanning 9 to 244 (KEILHKFNVP…YDEEVKEEIE (236 aa)) is the ATP-grasp domain. ATP contacts are provided by residues lysine 46, 53–55 (GRG), glutamate 99, serine 102, and glutamate 107. Asparagine 199 and aspartate 213 together coordinate Mg(2+). Substrate-binding positions include asparagine 264 and 321–323 (GIM).

Belongs to the succinate/malate CoA ligase beta subunit family. Heterotetramer of two alpha and two beta subunits. It depends on Mg(2+) as a cofactor.

It catalyses the reaction succinate + ATP + CoA = succinyl-CoA + ADP + phosphate. The enzyme catalyses GTP + succinate + CoA = succinyl-CoA + GDP + phosphate. Its pathway is carbohydrate metabolism; tricarboxylic acid cycle; succinate from succinyl-CoA (ligase route): step 1/1. Its function is as follows. Succinyl-CoA synthetase functions in the citric acid cycle (TCA), coupling the hydrolysis of succinyl-CoA to the synthesis of either ATP or GTP and thus represents the only step of substrate-level phosphorylation in the TCA. The beta subunit provides nucleotide specificity of the enzyme and binds the substrate succinate, while the binding sites for coenzyme A and phosphate are found in the alpha subunit. This Wolbachia pipientis subsp. Culex pipiens (strain wPip) protein is Succinate--CoA ligase [ADP-forming] subunit beta.